The primary structure comprises 557 residues: Glypican-4 (557 aa).

Positions 1 to 18 are cleaved as a signal peptide; it reads MARLGLLALLCTLAALSA. Phosphoserine is present on Ser-357. 3 O-linked (Xyl...) (glycosaminoglycan) serine glycosylation sites follow: Ser-494, Ser-498, and Ser-500. An N-linked (GlcNAc...) asparagine glycan is attached at Asn-514. Ser-529 carries the GPI-anchor amidated serine lipid modification. The propeptide at 530-557 is removed in mature form; sequence AGGAHAEAKPYLLAALCILFLAVQGEWR.

It belongs to the glypican family. As to expression, highly expressed in developing brain and kidney.

It is found in the cell membrane. The protein resides in the secreted. Its subcellular location is the extracellular space. In terms of biological role, cell surface proteoglycan that bears heparan sulfate. May be involved in the development of kidney tubules and of the central nervous system. The sequence is that of Glypican-4 (Gpc4) from Mus musculus (Mouse).